Here is a 137-residue protein sequence, read N- to C-terminus: Large ribosomal subunit protein uL14 (137 aa).

This sequence belongs to the universal ribosomal protein uL14 family. Part of the 50S ribosomal subunit. Forms a cluster with proteins L3 and L24e, part of which may contact the 16S rRNA in 2 intersubunit bridges.

Binds to 23S rRNA. Forms part of two intersubunit bridges in the 70S ribosome. This Ignicoccus hospitalis (strain KIN4/I / DSM 18386 / JCM 14125) protein is Large ribosomal subunit protein uL14.